A 1303-amino-acid polypeptide reads, in one-letter code: Serine/threonine-protein kinase ULK4 (1303 aa).

The Protein kinase domain maps to 4–280 (FVLYEEIGRG…WEGVLQHPFW (277 aa)). Asp-121 serves as the catalytic Proton acceptor. 2 disordered regions span residues 304–332 (ECSGPHDSRELLQSPKNGQAKGQKAAHRL) and 369–401 (TSAMVELNPGEGEDPSSPQKTSPLSKMTSGHLS). Positions 384 to 400 (SSPQKTSPLSKMTSGHL) are enriched in polar residues. HEAT repeat units follow at residues 504 to 543 (RLLHSPLFQLLIQHLRIAPNWDIRSKVARVVGMLALHTTE), 727 to 765 (LIQEKDFVSTVIRLLDSPSTPIRAKAFLVLLYILIHNRD), 796 to 834 (NEYLARCLDLLIQHMVQEPPRILGDILNALANVSGRKHP), 926 to 964 (STVMDYILPPLVSLVQSQNVEWRLFSLRLLSETTTLLVS), 1025 to 1063 (LVEESKLVPLIFEVILEHQESILGNTMQSVIALLNNLVA), 1105 to 1143 (STLLASLLDILLGMLTYTSRIVRQALQVQKSGSRGDTQA), and 1151 to 1189 (SKPLTDLISLLIPLLPSEDPEISEVSSKCLSILVQLYGG).

Belongs to the protein kinase superfamily. Ser/Thr protein kinase family. APG1/unc-51/ULK1 subfamily. Expressed in embryonic and adult brain. In the brain, widely expressed, with highest levels in layers II/III and V of the cortex, piriform cortex, CA1-3 of hippocampus, dentate gyrus, ependymal cells lining the ventricles and choroid plexus, and in the thalamic reticular nucleus (at protein level).

The enzyme catalyses L-seryl-[protein] + ATP = O-phospho-L-seryl-[protein] + ADP + H(+). It catalyses the reaction L-threonyl-[protein] + ATP = O-phospho-L-threonyl-[protein] + ADP + H(+). Its function is as follows. May be involved in the remodeling of cytoskeletal components, such as alpha-tubulin, and in this way regulates neurite branching and elongation, as well as cell motility. The sequence is that of Serine/threonine-protein kinase ULK4 (Ulk4) from Mus musculus (Mouse).